The primary structure comprises 315 residues: Aspartate carbamoyltransferase catalytic subunit (315 aa).

Positions 61 and 62 each coordinate carbamoyl phosphate. Residue Lys-90 coordinates L-aspartate. Carbamoyl phosphate contacts are provided by Arg-111, His-139, and Gln-142. Residues Arg-172 and Arg-234 each coordinate L-aspartate. 2 residues coordinate carbamoyl phosphate: Leu-274 and Pro-275.

The protein belongs to the aspartate/ornithine carbamoyltransferase superfamily. ATCase family. In terms of assembly, heterooligomer of catalytic and regulatory chains.

The catalysed reaction is carbamoyl phosphate + L-aspartate = N-carbamoyl-L-aspartate + phosphate + H(+). It participates in pyrimidine metabolism; UMP biosynthesis via de novo pathway; (S)-dihydroorotate from bicarbonate: step 2/3. In terms of biological role, catalyzes the condensation of carbamoyl phosphate and aspartate to form carbamoyl aspartate and inorganic phosphate, the committed step in the de novo pyrimidine nucleotide biosynthesis pathway. In Hyperthermus butylicus (strain DSM 5456 / JCM 9403 / PLM1-5), this protein is Aspartate carbamoyltransferase catalytic subunit.